The primary structure comprises 456 residues: tRNA modification GTPase MnmE (456 aa).

Residues Arg-24, Glu-81, and Lys-120 each contribute to the (6S)-5-formyl-5,6,7,8-tetrahydrofolate site. A TrmE-type G domain is found at 216-379 (GMTVVIAGRP…LRDHLKGCMG (164 aa)). Asn-226 is a binding site for K(+). Residues 226–231 (NAGKSS), 245–251 (TDIAGTT), 270–273 (DTAG), and 335–338 (NKAD) each bind GTP. Residue Ser-230 coordinates Mg(2+). 3 residues coordinate K(+): Thr-245, Ile-247, and Thr-250. Thr-251 serves as a coordination point for Mg(2+). Lys-456 provides a ligand contact to (6S)-5-formyl-5,6,7,8-tetrahydrofolate.

It belongs to the TRAFAC class TrmE-Era-EngA-EngB-Septin-like GTPase superfamily. TrmE GTPase family. As to quaternary structure, homodimer. Heterotetramer of two MnmE and two MnmG subunits. Requires K(+) as cofactor.

It is found in the cytoplasm. In terms of biological role, exhibits a very high intrinsic GTPase hydrolysis rate. Involved in the addition of a carboxymethylaminomethyl (cmnm) group at the wobble position (U34) of certain tRNAs, forming tRNA-cmnm(5)s(2)U34. This is tRNA modification GTPase MnmE from Pseudomonas putida (strain ATCC 47054 / DSM 6125 / CFBP 8728 / NCIMB 11950 / KT2440).